Consider the following 494-residue polypeptide: Tripartite motif-containing protein 5 (494 aa).

Ala-2 carries the N-acetylalanine modification. The segment at 15–59 (CPICLELLTEPLSLDCGHSFCQACITANHKESTPHQGERSCPLCR) adopts an RING-type zinc-finger fold. Ser-86 bears the Phosphoserine mark. The B box-type zinc-finger motif lies at 91–132 (QKVGHCARHGEKLLLFCEQDGNVICWLCERSQEHRGHHTLLV). The Zn(2+) site is built by Cys-96, His-99, Cys-118, and His-124. Residues 131 to 223 (LVEEVAEKYQ…RLVQSESDMV (93 aa)) are a coiled coil. The required for interaction with GABARAP and for autophagy stretch occupies residues 186–199 (FKQLRDILDCEESK). Residues 280–494 (PDLKAMLQAF…LPMTLCSPSS (215 aa)) form the B30.2/SPRY domain.

Belongs to the TRIM/RBCC family. Can form homodimers and homotrimers. In addition to lower-order dimerization, also exhibits a higher-order multimerization and both low- and high-order multimerizations are essential for its restriction activity. Interacts with BTBD1 and BTBD2. Interacts with PSMC4, PSMC5, PSMD7 and HSPA8/HSC70. Interacts (via B30.2/SPRY domain) with HSPA1A/B. Interacts with PSMC2, MAP3K7/TAK1, TAB2 and TAB3. Interacts with SQSTM1. Interacts with TRIM6 and TRIM34. Interacts with ULK1 (phosphorylated form), GABARAP, GABARAPL1, GABARAPL2, MAP1LC3A, MAP1LC3C and BECN1. Degraded in a proteasome-independent fashion in the absence of viral infection but in a proteasome-dependent fashion following exposure to restriction sensitive virus. In terms of processing, autoubiquitinated in a RING finger- and UBE2D2-dependent manner. Monoubiquitinated by TRIM21. Deubiquitinated by Yersinia YopJ. Ubiquitination may not lead to proteasomal degradation.

Its subcellular location is the cytoplasm. The protein resides in the nucleus. It catalyses the reaction S-ubiquitinyl-[E2 ubiquitin-conjugating enzyme]-L-cysteine + [acceptor protein]-L-lysine = [E2 ubiquitin-conjugating enzyme]-L-cysteine + N(6)-ubiquitinyl-[acceptor protein]-L-lysine.. It participates in protein modification; protein ubiquitination. Capsid-specific restriction factor that prevents infection from non-host-adapted retroviruses. Blocks viral replication early in the life cycle, after viral entry but before reverse transcription. In addition to acting as a capsid-specific restriction factor, also acts as a pattern recognition receptor that activates innate immune signaling in response to the retroviral capsid lattice. Binding to the viral capsid triggers its E3 ubiquitin ligase activity, and in concert with the heterodimeric ubiquitin conjugating enzyme complex UBE2V1-UBE2N (also known as UBC13-UEV1A complex) generates 'Lys-63'-linked polyubiquitin chains, which in turn are catalysts in the autophosphorylation of the MAP3K7/TAK1 complex (includes TAK1, TAB2, and TAB3). Activation of the MAP3K7/TAK1 complex by autophosphorylation results in the induction and expression of NF-kappa-B and MAPK-responsive inflammatory genes, thereby leading to an innate immune response in the infected cell. Plays a role in regulating autophagy through activation of autophagy regulator BECN1 by causing its dissociation from its inhibitors BCL2 and TAB2. The sequence is that of Tripartite motif-containing protein 5 (TRIM5) from Saguinus labiatus (Red-chested mustached tamarin).